Reading from the N-terminus, the 120-residue chain is U13-lycotoxin-Ls1f (120 aa).

The signal sequence occupies residues 1-19; it reads MKILFVLISILYAVYRFSS. Positions 20-54 are excised as a propeptide; it reads EEDVDSAYLANELEPVEDINSEQYAALEPKEEQER. 4 disulfide bridges follow: cysteine 56-cysteine 70, cysteine 63-cysteine 76, cysteine 69-cysteine 87, and cysteine 78-cysteine 85. One can recognise an Agouti domain in the interval 56 to 95; sequence CAGMGQDCKDDCDCCLNIATCNCWFGRYFCSCTFGDYQTC.

It belongs to the neurotoxin 05 (agouti) family. Contains 6 disulfide bonds. In terms of tissue distribution, expressed by the venom gland.

The protein localises to the secreted. The chain is U13-lycotoxin-Ls1f from Lycosa singoriensis (Wolf spider).